The following is a 436-amino-acid chain: Fasciclin-like arabinogalactan protein 15 (436 aa).

An N-terminal signal peptide occupies residues 1 to 20 (MDDLSKLLFFLLLTISITTA). FAS1 domains lie at 31 to 165 (NSNS…ERLL) and 249 to 392 (VKDF…DGVL). Residues Asn-68 and Asn-271 are each glycosylated (N-linked (GlcNAc...) asparagine).

This sequence belongs to the fasciclin-like AGP family.

The protein resides in the secreted. Functionally, may be a cell surface adhesion protein. This Arabidopsis thaliana (Mouse-ear cress) protein is Fasciclin-like arabinogalactan protein 15 (FLA15).